The following is an 81-amino-acid chain: Sulfur carrier protein TusA (81 aa).

The active-site Cysteine persulfide intermediate is the cysteine 19.

It belongs to the sulfur carrier protein TusA family.

It is found in the cytoplasm. In terms of biological role, sulfur carrier protein which probably makes part of a sulfur-relay system. The chain is Sulfur carrier protein TusA from Shewanella baltica (strain OS223).